A 427-amino-acid chain; its full sequence is Peptidase B (427 aa).

Lys-195 and Asp-200 together coordinate Mn(2+). The active site involves Lys-207. Positions 218, 277, and 279 each coordinate Mn(2+). Arg-281 is an active-site residue.

Belongs to the peptidase M17 family. Homohexamer. Mn(2+) serves as cofactor.

The protein resides in the cytoplasm. It catalyses the reaction Release of an N-terminal amino acid, Xaa, from a peptide or arylamide. Xaa is preferably Glu or Asp but may be other amino acids, including Leu, Met, His, Cys and Gln.. Its function is as follows. Probably plays an important role in intracellular peptide degradation. This Citrobacter koseri (strain ATCC BAA-895 / CDC 4225-83 / SGSC4696) protein is Peptidase B.